Reading from the N-terminus, the 229-residue chain is Large ribosomal subunit protein uL1 (229 aa).

The protein belongs to the universal ribosomal protein uL1 family. As to quaternary structure, part of the 50S ribosomal subunit.

In terms of biological role, binds directly to 23S rRNA. The L1 stalk is quite mobile in the ribosome, and is involved in E site tRNA release. Protein L1 is also a translational repressor protein, it controls the translation of the L11 operon by binding to its mRNA. This chain is Large ribosomal subunit protein uL1, found in Streptococcus pyogenes serotype M1.